We begin with the raw amino-acid sequence, 633 residues long: uncharacterized protein (633 aa).

Residues 12 to 43 (ESGTNNYSDTIANGNTLPPRSKKGHSGRRKRS) form a disordered region. Residues 13 to 29 (SGTNNYSDTIANGNTLP) show a composition bias toward polar residues. Positions 31–42 (RSKKGHSGRRKR) are enriched in basic residues. Helical transmembrane passes span 99–118 (ILFG…SSAL) and 217–233 (NCAF…ITAC). Positions 593-612 (DAETNKATGSAKSENIETKS) are disordered.

It localises to the membrane. This is an uncharacterized protein from Saccharomyces cerevisiae (strain ATCC 204508 / S288c) (Baker's yeast).